Here is a 681-residue protein sequence, read N- to C-terminus: NADH-quinone oxidoreductase subunit G (681 aa).

Residues 1 to 78 form the 2Fe-2S ferredoxin-type domain; it reads MIKLTIDGQE…GMVIHTDTPM (78 aa). 4 residues coordinate [2Fe-2S] cluster: Cys34, Cys45, Cys48, and Cys62. The 40-residue stretch at 78–117 folds into the 4Fe-4S His(Cys)3-ligated-type domain; that stretch reads MVKKAREGVMEFLLVNHPLDCPICDQGGECDLQDQAFRYG. Residues His94, Cys98, Cys101, Cys107, Cys146, Cys149, Cys152, and Cys196 each contribute to the [4Fe-4S] cluster site. The 4Fe-4S Mo/W bis-MGD-type domain maps to 215-271; it reads LRHTASIGVHDAEGSNIRIDSRGDEVMRVLPRVNEEINEEWLSDKNRFSYDGLKYQR.

It belongs to the complex I 75 kDa subunit family. Requires [2Fe-2S] cluster as cofactor. [4Fe-4S] cluster is required as a cofactor.

The enzyme catalyses a quinone + NADH + 5 H(+)(in) = a quinol + NAD(+) + 4 H(+)(out). In terms of biological role, NDH-1 shuttles electrons from NADH, via FMN and iron-sulfur (Fe-S) centers, to quinones in the respiratory chain. Couples the redox reaction to proton translocation (for every two electrons transferred, four hydrogen ions are translocated across the cytoplasmic membrane), and thus conserves the redox energy in a proton gradient. The sequence is that of NADH-quinone oxidoreductase subunit G (nuoG) from Rickettsia bellii (strain RML369-C).